The following is a 248-amino-acid chain: Amphiregulin (248 aa).

Residues 1–26 (MRTPLLPLARSVLLLLVLGSGHYAAA) form the signal peptide. The propeptide occupies 27–99 (LELNDPSSGK…IIDDSVRVEQ (73 aa)). Disordered stretches follow at residues 29–48 (LNDP…SAGG), 57–77 (VSTI…YDYS), and 100–136 (VIKP…KKKK). The span at 58 to 70 (STISEMPSGSELS) shows a compositional bias: polar residues. The segment covering 100 to 116 (VIKPKKNKTEGEKSTEK) has biased composition (basic and acidic residues). Residue asparagine 106 is glycosylated (N-linked (GlcNAc...) asparagine). Over residues 117–136 (PKRKKKGGKNGKGRRNKKKK) the composition is skewed to basic residues. Positions 135–175 (KKNPCTAKFQNFCIHGECRYIENLEVVTCNCHQDYFGERCG) constitute an EGF-like domain. Cystine bridges form between cysteine 139/cysteine 152, cysteine 147/cysteine 163, and cysteine 165/cysteine 174. The helical transmembrane segment at 192–215 (IAVVAVTIFVSAIILAAIGIGIVI) threads the bilayer. Asparagine 241 carries N-linked (GlcNAc...) asparagine glycosylation.

This sequence belongs to the amphiregulin family. As to quaternary structure, the immature precursor interacts with CNIH.

It localises to the membrane. Functionally, ligand of the EGF receptor/EGFR. Autocrine growth factor as well as a mitogen for a broad range of target cells including astrocytes, Schwann cells and fibroblasts. The polypeptide is Amphiregulin (Areg) (Mus musculus (Mouse)).